The chain runs to 314 residues: Taste receptor type 2 member 42 (314 aa).

Residues 1-7 (MATEMDK) are Extracellular-facing. The chain crosses the membrane as a helical span at residues 8–28 (IFLTLATVEFIIGMLGNVFIG). Residues 29 to 50 (LVNCSEGIKNQKVFSVDFILTC) lie on the Cytoplasmic side of the membrane. A helical transmembrane segment spans residues 51–71 (LAISTIGHLLVILFDSCVVGL). Residues 72–101 (APHLYATDRVRRPVTMLWHMXNHLTTWLAT) lie on the Extracellular side of the membrane. A helical transmembrane segment spans residues 102-122 (CLSIFYFFKIAHFPHSLFLWL). Over 123-127 (RWRMN) the chain is Cytoplasmic. Residues 128-148 (RVIAILLTLSLFLLIFDCLVL) traverse the membrane as a helical segment. The Extracellular portion of the chain corresponds to 149-187 (EMFIDXSLNIIDKSNLTLYLDESKTPYDKLSLLKILLSL). Asn-163 is a glycosylation site (N-linked (GlcNAc...) asparagine). Residues 188-208 (NSFIPFSLCLTSLLFLFLSLV) traverse the membrane as a helical segment. Topologically, residues 209 to 238 (RHTRNLKLSSLGSRDSSTEAHRRAMKMVMS) are cytoplasmic. The helical transmembrane segment at 239–259 (LLFLFIVHFFSLQVANWTFCI) threads the bilayer. Topologically, residues 260–265 (LGNNKY) are extracellular. The helical transmembrane segment at 266–286 (TQFVTLALHAFPSCHSFILIL) threads the bilayer. The Cytoplasmic segment spans residues 287–314 (GNSKLRQTAVRLLWHLRNYTKRPNPLPL).

It belongs to the G-protein coupled receptor T2R family.

The protein resides in the membrane. In terms of biological role, receptor that may play a role in the perception of bitterness and is gustducin-linked. May play a role in sensing the chemical composition of the gastrointestinal content. The activity of this receptor may stimulate alpha gustducin, mediate PLC-beta-2 activation and lead to the gating of TRPM5. In Macaca mulatta (Rhesus macaque), this protein is Taste receptor type 2 member 42 (TAS2R42).